Reading from the N-terminus, the 174-residue chain is Nucleoside-triphosphatase THEP1 (174 aa).

Residues 7-14 (GRPGSGKS) and 98-105 (CIIIDEIG) contribute to the ATP site.

This sequence belongs to the THEP1 NTPase family.

The catalysed reaction is a ribonucleoside 5'-triphosphate + H2O = a ribonucleoside 5'-diphosphate + phosphate + H(+). In terms of biological role, has nucleotide phosphatase activity towards ATP, GTP, CTP, TTP and UTP. May hydrolyze nucleoside diphosphates with lower efficiency. This Methanothermobacter thermautotrophicus (strain ATCC 29096 / DSM 1053 / JCM 10044 / NBRC 100330 / Delta H) (Methanobacterium thermoautotrophicum) protein is Nucleoside-triphosphatase THEP1.